Here is a 292-residue protein sequence, read N- to C-terminus: Outer membrane protein assembly factor BamD (292 aa).

A signal peptide spans 1–26 (MIQRPTFFTPTHLLAMLLATFVLITG). Cys27 carries the N-palmitoyl cysteine lipid modification. A lipid anchor (S-diacylglycerol cysteine) is attached at Cys27.

This sequence belongs to the BamD family. Part of the Bam complex.

The protein resides in the cell outer membrane. Part of the outer membrane protein assembly complex, which is involved in assembly and insertion of beta-barrel proteins into the outer membrane. The chain is Outer membrane protein assembly factor BamD from Xylella fastidiosa (strain 9a5c).